A 162-amino-acid polypeptide reads, in one-letter code: UPF0114 protein Pput_0713 (162 aa).

4 helical membrane-spanning segments follow: residues 15-35 (LLAP…LKFF), 53-73 (LILV…LVMV), 109-126 (VAAS…RVFM), and 136-156 (LMWY…MGYL).

It belongs to the UPF0114 family.

The protein resides in the cell membrane. This chain is UPF0114 protein Pput_0713, found in Pseudomonas putida (strain ATCC 700007 / DSM 6899 / JCM 31910 / BCRC 17059 / LMG 24140 / F1).